A 1260-amino-acid chain; its full sequence is Phosphatidylinositol 3,4,5-trisphosphate 5-phosphatase 2 (1260 aa).

In terms of domain architecture, SH2 spans 25 to 121 (WYHRDLSRAA…GLVCALLLPV (97 aa)). Over residues 126-136 (ELDPPDERDAS) the composition is skewed to basic and acidic residues. The segment at 126-178 (ELDPPDERDASDGEDEKPPLPPRSGTSVSAPLGPSSPPAAPEPPTPAVESAPN) is disordered. At serine 136 the chain carries Phosphoserine. Over residues 159-171 (PSSPPAAPEPPTP) the composition is skewed to pro residues. 2 positions are modified to phosphoserine: serine 243 and serine 355. Residue tyrosine 888 is modified to Phosphotyrosine. Residue serine 892 is modified to Phosphoserine. Positions 899 to 1120 (GAKSKAPSVS…FLGEAAGGDD (222 aa)) are disordered. The segment covering 940–952 (PPPTGRPPAPPRA) has biased composition (pro residues). The SH3-binding signature appears at 946–951 (PPAPPR). Residues 953-967 (APREEPLTPRLKPEG) are compositionally biased toward basic and acidic residues. Threonine 960 carries the phosphothreonine modification. The NPXY motif motif lies at 985–988 (NPAY). A Phosphotyrosine modification is found at tyrosine 988. 3 stretches are compositionally biased toward pro residues: residues 998-1013 (LLPP…PVPP), 1050-1061 (LPPPDFPPPPLP), and 1090-1108 (LPPP…PLPP). At serine 1133 the chain carries Phosphoserine. Phosphotyrosine is present on tyrosine 1164. Positions 1181 to 1200 (EDLAEEAPCPQAGRTGGLGE) are disordered. Residues 1198-1260 (LGEAGMGAWL…LLLDTLQLSK (63 aa)) form the SAM domain. Phosphoserine is present on serine 1259.

The protein belongs to the inositol 1,4,5-trisphosphate 5-phosphatase family. Interacts with tyrosine phosphorylated form of SHC1. Interacts with EGFR. Upon stimulation by the EGF signaling pathway, it forms a complex with SHC1 and EGFR. Interacts with cytoskeletal protein SORBS3/vinexin, promoting its localization to the periphery of cells. Forms a complex with filamin (FLNA or FLNB), actin, GPIb (GP1BA or GP1BB) that regulates cortical and submembraneous actin. Interacts with c-Met/MET, when c-Met/MET is phosphorylated on 'Tyr-1356'. Interacts with p130Cas/BCAR1. Interacts with CENTD3/ARAP3 via its SAM domain. Interacts with c-Cbl/CBL and CAP/SORBS1. Interacts with activated EPHA2 receptor. Interacts with receptor FCGR2A. Interacts with receptor FCGR2B. Interacts with tyrosine kinase ABL1. Interacts with tyrosine kinase TEC. Interacts with CSF1R. Interacts (via N-terminus) with SH3YL1 (via SH3 domain). Interacts with FCRL6 (tyrosine phosphorylated form). Interacts (via SH2 domain) with tyrosine phosphorylated KLRC1 (via ITIM). Interacts with NEDD9/HEF1. Tyrosine phosphorylated by the members of the SRC family after exposure to a diverse array of extracellular stimuli such as insulin, growth factors such as EGF or PDGF, chemokines, integrin ligands and hypertonic and oxidative stress. May be phosphorylated upon IgG receptor FCGR2B-binding. Phosphorylated at Tyr-988 following cell attachment and spreading. Phosphorylated at Tyr-1164 following EGF signaling pathway stimulation. In terms of tissue distribution, expressed abundantly in skeletal muscle tissue.

It localises to the cytoplasm. The protein localises to the cytosol. The protein resides in the cytoskeleton. It is found in the membrane. Its subcellular location is the cell projection. It localises to the filopodium. The protein localises to the lamellipodium. The protein resides in the basal cell membrane. It is found in the nucleus. Its subcellular location is the nucleus speckle. It localises to the spindle pole. It carries out the reaction a 1,2-diacyl-sn-glycero-3-phospho-(1D-myo-inositol-3,4,5-trisphosphate) + H2O = a 1,2-diacyl-sn-glycero-3-phospho-(1D-myo-inositol-3,4-bisphosphate) + phosphate. The catalysed reaction is 1,2-dioctanoyl-sn-glycero-3-phospho-(1D-myo-inositol-3,4,5-trisphosphate) + H2O = 1,2-dioctanoyl-sn-glycero-3-phospho-(1D-myo-inositol-3,4-bisphosphate) + phosphate. It catalyses the reaction 1,2-dihexadecanoyl-sn-glycero-3-phospho-(1D-myo-inositol-3,4,5-trisphosphate) + H2O = 1,2-dihexadecanoyl-sn-glycero-3-phospho-(1D-myo-inositol-3,4-bisphosphate) + phosphate. With respect to regulation, activated upon translocation to the sites of synthesis of PtdIns(3,4,5)P3 in the membrane. Enzymatic activity is enhanced in the presence of phosphatidylserine. In terms of biological role, phosphatidylinositol (PtdIns) phosphatase that specifically hydrolyzes the 5-phosphate of phosphatidylinositol-3,4,5-trisphosphate (PtdIns(3,4,5)P3) to produce PtdIns(3,4)P2, thereby negatively regulating the PI3K (phosphoinositide 3-kinase) pathways. Required for correct mitotic spindle orientation and therefore progression of mitosis. Plays a central role in regulation of PI3K-dependent insulin signaling, although the precise molecular mechanisms and signaling pathways remain unclear. While overexpression reduces both insulin-stimulated MAP kinase and Akt activation, its absence does not affect insulin signaling or GLUT4 trafficking. Confers resistance to dietary obesity. May act by regulating AKT2, but not AKT1, phosphorylation at the plasma membrane. Part of a signaling pathway that regulates actin cytoskeleton remodeling. Required for the maintenance and dynamic remodeling of actin structures as well as in endocytosis, having a major impact on ligand-induced EGFR internalization and degradation. Participates in regulation of cortical and submembraneous actin by hydrolyzing PtdIns(3,4,5)P3 thereby regulating membrane ruffling. Regulates cell adhesion and cell spreading. Required for HGF-mediated lamellipodium formation, cell scattering and spreading. Acts as a negative regulator of EPHA2 receptor endocytosis by inhibiting via PI3K-dependent Rac1 activation. Acts as a regulator of neuritogenesis by regulating PtdIns(3,4,5)P3 level and is required to form an initial protrusive pattern, and later, maintain proper neurite outgrowth. Acts as a negative regulator of the FC-gamma-RIIA receptor (FCGR2A). Mediates signaling from the FC-gamma-RIIB receptor (FCGR2B), playing a central role in terminating signal transduction from activating immune/hematopoietic cell receptor systems. Involved in EGF signaling pathway. Upon stimulation by EGF, it is recruited by EGFR and dephosphorylates PtdIns(3,4,5)P3. Plays a negative role in regulating the PI3K-PKB pathway, possibly by inhibiting PKB activity. Down-regulates Fc-gamma-R-mediated phagocytosis in macrophages independently of INPP5D/SHIP1. In macrophages, down-regulates NF-kappa-B-dependent gene transcription by regulating macrophage colony-stimulating factor (M-CSF)-induced signaling. Plays a role in the localization of AURKA and NEDD9/HEF1 to the basolateral membrane at interphase in polarized cysts, thereby mediates cell cycle homeostasis, cell polarization and cilia assembly. Additionally promotion of cilia growth is also facilitated by hydrolysis of (PtdIns(3,4,5)P3) to PtdIns(3,4)P2. Promotes formation of apical membrane-initiation sites during the initial stages of lumen formation via Rho family-induced actin filament organization and CTNNB1 localization to cell-cell contacts. May also hydrolyze PtdIns(1,3,4,5)P4, and could thus affect the levels of the higher inositol polyphosphates like InsP6. Involved in endochondral ossification. The sequence is that of Phosphatidylinositol 3,4,5-trisphosphate 5-phosphatase 2 from Sus scrofa (Pig).